The primary structure comprises 302 residues: 4-diphosphocytidyl-2-C-methyl-D-erythritol kinase (302 aa).

Lys13 is an active-site residue. 101-111 contacts ATP; that stretch reads PVASGIGGGSS. Residue Asp143 is part of the active site.

It belongs to the GHMP kinase family. IspE subfamily.

The enzyme catalyses 4-CDP-2-C-methyl-D-erythritol + ATP = 4-CDP-2-C-methyl-D-erythritol 2-phosphate + ADP + H(+). Its pathway is isoprenoid biosynthesis; isopentenyl diphosphate biosynthesis via DXP pathway; isopentenyl diphosphate from 1-deoxy-D-xylulose 5-phosphate: step 3/6. Catalyzes the phosphorylation of the position 2 hydroxy group of 4-diphosphocytidyl-2C-methyl-D-erythritol. The sequence is that of 4-diphosphocytidyl-2-C-methyl-D-erythritol kinase from Granulibacter bethesdensis (strain ATCC BAA-1260 / CGDNIH1).